Consider the following 350-residue polypeptide: Induced myeloid leukemia cell differentiation protein Mcl-1 homolog (350 aa).

Residues Lys-5 and Lys-40 each participate in a glycyl lysine isopeptide (Lys-Gly) (interchain with G-Cter in ubiquitin) cross-link. Residues 104–175 (CASPPEEMEG…PAEEEEDELF (72 aa)) form a PEST-like region. A Phosphoserine modification is found at Ser-121. Lys-136 is covalently cross-linked (Glycyl lysine isopeptide (Lys-Gly) (interchain with G-Cter in ubiquitin)). The tract at residues 148–170 (GEASSGPGTDGSLPSTPPPAEEE) is disordered. Ser-159 is modified (phosphoserine; by GSK3-alpha and GSK3-beta). The residue at position 162 (Ser-162) is a Phosphoserine. Phosphothreonine; by MAPK is present on Thr-163. Glycyl lysine isopeptide (Lys-Gly) (interchain with G-Cter in ubiquitin) cross-links involve residues Lys-194 and Lys-197. The short motif at 209 to 223 (ALETLRRVGDGVQRN) is the BH3 element. Residues 252–272 (HVFSDGVTNWGRIVTLISFGA) carry the BH1 motif. The BH2 signature appears at 304–319 (DWLVKQRGWDGFVEFF). The helical transmembrane segment at 328–348 (IRNVLLAFAGVAGVGAGLAYL) threads the bilayer.

Belongs to the Bcl-2 family. Interacts with HIF3A (via C-terminus domain). Interacts with BOK, BIK, BAX, BAK1, and TPT1. Interacts with unphosphorylated BAD. Interacts with BMF, BBC3 and PMAIP1. Interacts with BOP. Interacts with BCL2L11; may sequester BCL2L11 to prevent its pro-apoptotic activity. Interacts with GIMAP5 and HSPA8/HSC70; the interaction between HSPA8 and MCL1 is impaired in the absence of GIMAP5. In terms of processing, cleaved by CASP3 during apoptosis, yielding a pro-apoptotic C-terminal fragment. Post-translationally, rapidly degraded in the absence of phosphorylation in the PEST region. Phosphorylated on Ser-159, by GSK3, in response to IL3/interleukin-3 withdrawal. Phosphorylation at Ser-159 induces ubiquitination and proteasomal degradation, abrogating the anti-apoptotic activity. Treatment with taxol or okadaic acid induces phosphorylation on additional sites. In terms of processing, ubiquitinated. Ubiquitination is induced by phosphorylation at Ser-159. Deubiquitinated by USP20; leading to increased stability.

The protein localises to the membrane. The protein resides in the cytoplasm. It is found in the mitochondrion. Its subcellular location is the nucleus. It localises to the nucleoplasm. Its function is as follows. Involved in the regulation of apoptosis versus cell survival, and in the maintenance of viability but not of proliferation. Mediates its effects by interactions with a number of other regulators of apoptosis. This chain is Induced myeloid leukemia cell differentiation protein Mcl-1 homolog (MCL1), found in Felis catus (Cat).